The sequence spans 1300 residues: Serine protease EspP (1300 aa).

The first 55 residues, 1-55 (MNKIYSLKYSHITGGLIAVSELSGRVSSRATGKKKHKRILALCFLGLLQSSYSFA), serve as a signal peptide directing secretion. A Peptidase S6 domain is found at 57 to 311 (QMDISNFYIR…NQTTIDNLKN (255 aa)). Catalysis depends on charge relay system residues His-127, Asp-156, and Ser-263. The Autotransporter domain maps to 1034–1300 (DINGEAGAWA…AVNANFRYSF (267 aa)).

In terms of processing, cleaved to release the mature protein from the outer membrane.

Its subcellular location is the periplasm. It localises to the secreted. The protein resides in the cell surface. It is found in the cell outer membrane. Serine protease with cytotoxic effect. Disrupts actin cytoskeleton resulting cell detachment in vitro. This chain is Serine protease EspP (espP), found in Escherichia coli.